A 257-amino-acid chain; its full sequence is Acyl-[acyl-carrier-protein]--UDP-N-acetylglucosamine O-acyltransferase (257 aa).

Belongs to the transferase hexapeptide repeat family. LpxA subfamily. As to quaternary structure, homotrimer.

The protein resides in the cytoplasm. It catalyses the reaction a (3R)-hydroxyacyl-[ACP] + UDP-N-acetyl-alpha-D-glucosamine = a UDP-3-O-[(3R)-3-hydroxyacyl]-N-acetyl-alpha-D-glucosamine + holo-[ACP]. It participates in glycolipid biosynthesis; lipid IV(A) biosynthesis; lipid IV(A) from (3R)-3-hydroxytetradecanoyl-[acyl-carrier-protein] and UDP-N-acetyl-alpha-D-glucosamine: step 1/6. Involved in the biosynthesis of lipid A, a phosphorylated glycolipid that anchors the lipopolysaccharide to the outer membrane of the cell. The sequence is that of Acyl-[acyl-carrier-protein]--UDP-N-acetylglucosamine O-acyltransferase from Anaeromyxobacter sp. (strain Fw109-5).